The following is a 474-amino-acid chain: Adenosylhomocysteinase (474 aa).

The substrate site is built by Thr53, Asp135, and Glu197. 198–200 (TTT) serves as a coordination point for NAD(+). Substrate contacts are provided by Lys227 and Asp231. NAD(+) is bound by residues Asn232, 261 to 266 (GYGDVG), Glu284, Asn319, 340 to 342 (IGH), and Asn388.

Belongs to the adenosylhomocysteinase family. NAD(+) is required as a cofactor.

It is found in the cytoplasm. It carries out the reaction S-adenosyl-L-homocysteine + H2O = L-homocysteine + adenosine. It functions in the pathway amino-acid biosynthesis; L-homocysteine biosynthesis; L-homocysteine from S-adenosyl-L-homocysteine: step 1/1. Functionally, may play a key role in the regulation of the intracellular concentration of adenosylhomocysteine. This Corynebacterium glutamicum (strain ATCC 13032 / DSM 20300 / JCM 1318 / BCRC 11384 / CCUG 27702 / LMG 3730 / NBRC 12168 / NCIMB 10025 / NRRL B-2784 / 534) protein is Adenosylhomocysteinase.